The primary structure comprises 317 residues: MSKDDPINSIFFEHQEAALCAQHALNMLLQDALYKWQDLRDLAIQMDKMEQQILGNANPTPGRSENMNESGYFSIQVLEKALETFSLKLTNIENPAMVDYKNNPLTARAYICNLREHWFVLRKFGNQWFELNSVNRGPKLLSDTYVSMFLHQVSSEGYSIFVVQGVLPRSDADDLISLCPVVPPKVTPKKEQKLEKVMTKFFNTVGKRLGGGSGAPPDSQEEKDLAIAFAMSMETKDGSEVSRSSAEIDEENLRKAIELSQAPGPSEPAEIPLLTRSRSSTPPGASEPFSNAEQQRRDRQKFLERFEKKKEERNDEK.

The Josephin domain maps to 7 to 178 (INSIFFEHQE…RSDADDLISL (172 aa)). The Nucleophile role is filled by cysteine 20. Histidine 117 functions as the Proton acceptor in the catalytic mechanism. Asparagine 132 is an active-site residue. 2 consecutive UIM domains span residues 219-239 (SQEE…KDGS) and 247-264 (EIDE…QAPG). The interval 254–317 (RKAIELSQAP…KKKEERNDEK (64 aa)) is disordered. A compositionally biased stretch (polar residues) spans 276 to 293 (RSRSSTPPGASEPFSNAE). Positions 294–317 (QQRRDRQKFLERFEKKKEERNDEK) are enriched in basic and acidic residues. The interval 296–299 (RRDR) is interaction with cdc-48.1 and cdc-48.2.

Forms a complex composed of deubiquitinating enzyme atx-3, adapter ubxn-5 and cdc-48.1. Forms a complex composed of deubiquitinating enzyme atx-3, E4 ubiquitin-protein ligase ufd-2 and cdc-48.1. Interacts (via RRDR motif) with cdc-48.1 (via N-terminus) and cdc-48.2 (via N-terminus); the interaction with cdc-48.1 is not required for atx-3 enzymatic activity. Interacts (via C-terminus) with ubxn-5. May interact with ned-8. In terms of tissue distribution, expressed in germline (at protein level). Expressed in spermatheca, pharynx, dorsal and ventral cords, some head neurons, hypodermis, body wall muscles and coelomocytes.

It localises to the cytoplasm. Its subcellular location is the nucleus. It is found in the nucleolus. The catalysed reaction is Thiol-dependent hydrolysis of ester, thioester, amide, peptide and isopeptide bonds formed by the C-terminal Gly of ubiquitin (a 76-residue protein attached to proteins as an intracellular targeting signal).. Functionally, acts as a chain editing deubiquitinating enzyme that binds and cleaves 'Lys-48'-linked polyubiquitin chains, with a preference for chains containing four or more ubiquitin molecules thereby modulating protein degradation by the ubiquitin-proteasome pathway. Probably by regulating the IGF-1-insulin-like pathway, regulates lifespan. Regulates germline DNA double-strand-break repair and apoptosis in response to DNA damage by recruiting E4 ubiquitin-protein ligase ufd-2 to DNA repair foci. Interacts with key regulators of transcription and represses transcription. Acts as a histone-binding protein that regulates transcription. This chain is Ataxin-3 homolog (atx-3), found in Caenorhabditis elegans.